Reading from the N-terminus, the 838-residue chain is Phosphatidylethanolamine N-methyltransferase 1 (838 aa).

Over 1 to 48 (MATEIITEKKEIVARTRSSGITFNPPVTHDMVRSLFDPTIKKSFLECC) the chain is Lumenal. The chain crosses the membrane as a helical span at residues 49–69 (ITLTILANFVLCYYLINWFGL). Residues 70–73 (SQAK) are Cytoplasmic-facing. The chain crosses the membrane as a helical span at residues 74-94 (LIFLIQYVYWRLAYNLGIGII). Topologically, residues 95 to 157 (LHYQSHYESL…ELNCWLLFRQ (63 aa)) are lumenal. Residues 158-178 (FVDLILMQDFTTYIIYVYLSL) traverse the membrane as a helical segment. Over 179-184 (PTDVSS) the chain is Cytoplasmic. A helical transmembrane segment spans residues 185-205 (LINWKSLIGIAMILFNIWVKI). The Lumenal portion of the chain corresponds to 206–236 (DAHRVVKDYAWYWGDFFFLQDAELTFDGVFN). A helical transmembrane segment spans residues 237–257 (ISPHPMYSIGYLGYYGLSLIC). Over 258–261 (GDYR) the chain is Cytoplasmic. The chain crosses the membrane as a helical span at residues 262-282 (VLLVSVGGHFLQFLFLKYVES). Topologically, residues 283 to 328 (PHIERTYGSDSPSNSTQHQIDDLIAKENYDYSRPLINTGILFENFQ) are lumenal. Residues 329–349 (FLRFSDYFTVSTILVLFSWFF) traverse the membrane as a helical segment. Over 350-356 (TSKPSNN) the chain is Cytoplasmic. The chain crosses the membrane as a helical span at residues 357-377 (FLFVLTLLTKLTTWLLTSWIL). The Lumenal portion of the chain corresponds to 378–403 (FQQSNRKWFTRLFLKNGYTQIYSYQQ). Residues 404-424 (WQFLYNYSLIVTNTLLFLHTL) traverse the membrane as a helical segment. Topologically, residues 425-435 (SELYSIQSSDG) are cytoplasmic. The helical transmembrane segment at 436–456 (LNNSHVIFGLLLCAIQIWCNV) threads the bilayer. Residues 457 to 517 (ETRDAISDFG…VLMTNFSKTN (61 aa)) are Lumenal-facing. A helical membrane pass occupies residues 518-538 (VTLAVLWTVTNLIFVKLIEEP). Residues 539-838 (HVSKVYGNGT…DIKEVLDSLN (300 aa)) lie on the Cytoplasmic side of the membrane.

The protein belongs to the class VI-like SAM-binding methyltransferase superfamily. CHO2 family.

The protein localises to the endoplasmic reticulum membrane. It catalyses the reaction a 1,2-diacyl-sn-glycero-3-phosphoethanolamine + S-adenosyl-L-methionine = a 1,2-diacyl-sn-glycero-3-phospho-N-methylethanolamine + S-adenosyl-L-homocysteine + H(+). Its pathway is phospholipid metabolism; phosphatidylcholine biosynthesis. Functionally, catalyzes the first step of the methylation pathway of phosphatidylcholine biosynthesis, the SAM-dependent methylation of phosphatidylethanolamine (PE) to phosphatidylmonomethylethanolamine (PMME). This Vanderwaltozyma polyspora (strain ATCC 22028 / DSM 70294 / BCRC 21397 / CBS 2163 / NBRC 10782 / NRRL Y-8283 / UCD 57-17) (Kluyveromyces polysporus) protein is Phosphatidylethanolamine N-methyltransferase 1 (CHO2-1).